The sequence spans 295 residues: Serpentine receptor class gamma-53 (295 aa).

6 helical membrane passes run Ile-7–Ser-27, Val-39–Phe-61, Phe-121–Tyr-141, Cys-173–Val-193, Met-211–Thr-230, and Ile-241–Ile-261.

This sequence belongs to the nematode receptor-like protein srg family.

It localises to the membrane. This is Serpentine receptor class gamma-53 (srg-53) from Caenorhabditis elegans.